Here is a 431-residue protein sequence, read N- to C-terminus: UPF0597 protein BVU_2091 (431 aa).

This sequence belongs to the UPF0597 family.

In Phocaeicola vulgatus (strain ATCC 8482 / DSM 1447 / JCM 5826 / CCUG 4940 / NBRC 14291 / NCTC 11154) (Bacteroides vulgatus), this protein is UPF0597 protein BVU_2091.